The sequence spans 184 residues: Adenine phosphoribosyltransferase (184 aa).

This sequence belongs to the purine/pyrimidine phosphoribosyltransferase family. Homodimer.

The protein resides in the cytoplasm. The catalysed reaction is AMP + diphosphate = 5-phospho-alpha-D-ribose 1-diphosphate + adenine. The protein operates within purine metabolism; AMP biosynthesis via salvage pathway; AMP from adenine: step 1/1. In terms of biological role, catalyzes a salvage reaction resulting in the formation of AMP, that is energically less costly than de novo synthesis. This Shewanella putrefaciens (strain CN-32 / ATCC BAA-453) protein is Adenine phosphoribosyltransferase.